Here is a 114-residue protein sequence, read N- to C-terminus: Hydrogenase maturation factor HypA (114 aa).

H2 provides a ligand contact to Ni(2+). 4 residues coordinate Zn(2+): C73, C76, C89, and C92.

The protein belongs to the HypA/HybF family.

Functionally, involved in the maturation of [NiFe] hydrogenases. Required for nickel insertion into the metal center of the hydrogenase. The protein is Hydrogenase maturation factor HypA of Psychromonas ingrahamii (strain DSM 17664 / CCUG 51855 / 37).